A 382-amino-acid chain; its full sequence is tRNA(Met) cytidine acetate ligase (382 aa).

Residues 7–20, Gly100, Asn153, and Arg178 contribute to the ATP site; that span reads ITEY…HVYH.

This sequence belongs to the TmcAL family.

It is found in the cytoplasm. It carries out the reaction cytidine(34) in elongator tRNA(Met) + acetate + ATP = N(4)-acetylcytidine(34) in elongator tRNA(Met) + AMP + diphosphate. In terms of biological role, catalyzes the formation of N(4)-acetylcytidine (ac(4)C) at the wobble position of elongator tRNA(Met), using acetate and ATP as substrates. First activates an acetate ion to form acetyladenylate (Ac-AMP) and then transfers the acetyl group to tRNA to form ac(4)C34. The chain is tRNA(Met) cytidine acetate ligase from Staphylococcus carnosus (strain TM300).